We begin with the raw amino-acid sequence, 252 residues long: 2-succinyl-6-hydroxy-2,4-cyclohexadiene-1-carboxylate synthase (252 aa).

It belongs to the AB hydrolase superfamily. MenH family. Monomer.

The enzyme catalyses 5-enolpyruvoyl-6-hydroxy-2-succinyl-cyclohex-3-ene-1-carboxylate = (1R,6R)-6-hydroxy-2-succinyl-cyclohexa-2,4-diene-1-carboxylate + pyruvate. It functions in the pathway quinol/quinone metabolism; 1,4-dihydroxy-2-naphthoate biosynthesis; 1,4-dihydroxy-2-naphthoate from chorismate: step 3/7. It participates in quinol/quinone metabolism; menaquinone biosynthesis. In terms of biological role, catalyzes a proton abstraction reaction that results in 2,5-elimination of pyruvate from 2-succinyl-5-enolpyruvyl-6-hydroxy-3-cyclohexene-1-carboxylate (SEPHCHC) and the formation of 2-succinyl-6-hydroxy-2,4-cyclohexadiene-1-carboxylate (SHCHC). This is 2-succinyl-6-hydroxy-2,4-cyclohexadiene-1-carboxylate synthase from Escherichia coli (strain SE11).